A 413-amino-acid polypeptide reads, in one-letter code: Monacolin J acid methylbutanoyltransferase (413 aa).

A monacolin J-binding site is contributed by arginine 73. Serine 76 serves as the catalytic Acyl-ester intermediate. Positions 173, 188, and 258 each coordinate monacolin J. Glycine 366 is a binding site for 2-methylbutanoate. Residues glutamate 388 and tryptophan 390 each coordinate monacolin J.

Belongs to the class-A beta-lactamase family. As to quaternary structure, interacts with LovF.

The catalysed reaction is monacolin J carboxylate + (S)-2-methylbutanoyl-[2-methylbutanoate polyketide synthase] = lovastatin carboxylate + holo-[2-methylbutanoate polyketide synthase]. The protein operates within polyketide biosynthesis; lovastatin biosynthesis. Functionally, monacolin J acid methylbutanoyltransferase; part of the gene cluster that mediates the biosynthesis of lovastatin (also known as mevinolin, mevacor or monacolin K), a hypolipidemic inhibitor of (3S)-hydroxymethylglutaryl-coenzyme A (HMG-CoA) reductase (HMGR). The first step in the biosynthesis of lovastatin is the production of dihydromonacolin L acid by the lovastatin nonaketide synthase lovB and the trans-acting enoyl reductase lovC via condensation of one acetyl-CoA unit and 8 malonyl-CoA units. Dihydromonacolin L acid is released from lovB by the thioesterase lovG. Next, dihydromonacolin L acid is oxidized by the dihydromonacolin L monooxygenase lovA twice to form monacolin J acid. The 2-methylbutyrate moiety of lovastatin is synthesized by the lovastatin diketide synthase lovF via condensation of one acetyl-CoA unit and one malonyl-CoA unit. Finally, the covalent attachment of this moiety to monacolin J acid is catalyzed by the transesterase lovD to yield lovastatin. LovD has broad substrate specificity and can also convert monacolin J to simvastatin using alpha-dimethylbutanoyl-S-methyl-3-mercaptopropionate (DMB-S-MMP) as the thioester acyl donor, and can also catalyze the reverse reaction and function as hydrolase in vitro. LovD has much higher activity with LovF-bound 2-methylbutanoate than with free diketide substrates. This Aspergillus terreus protein is Monacolin J acid methylbutanoyltransferase.